A 99-amino-acid chain; its full sequence is Aspartyl/glutamyl-tRNA(Asn/Gln) amidotransferase subunit C (99 aa).

Belongs to the GatC family. Heterotrimer of A, B and C subunits.

The enzyme catalyses L-glutamyl-tRNA(Gln) + L-glutamine + ATP + H2O = L-glutaminyl-tRNA(Gln) + L-glutamate + ADP + phosphate + H(+). It catalyses the reaction L-aspartyl-tRNA(Asn) + L-glutamine + ATP + H2O = L-asparaginyl-tRNA(Asn) + L-glutamate + ADP + phosphate + 2 H(+). Functionally, allows the formation of correctly charged Asn-tRNA(Asn) or Gln-tRNA(Gln) through the transamidation of misacylated Asp-tRNA(Asn) or Glu-tRNA(Gln) in organisms which lack either or both of asparaginyl-tRNA or glutaminyl-tRNA synthetases. The reaction takes place in the presence of glutamine and ATP through an activated phospho-Asp-tRNA(Asn) or phospho-Glu-tRNA(Gln). The protein is Aspartyl/glutamyl-tRNA(Asn/Gln) amidotransferase subunit C of Burkholderia mallei (strain NCTC 10247).